A 388-amino-acid chain; its full sequence is 4-hydroxy-3-methylbut-2-en-1-yl diphosphate synthase (flavodoxin) (388 aa).

Residues cysteine 280, cysteine 283, cysteine 315, and glutamate 322 each contribute to the [4Fe-4S] cluster site. The segment at methionine 369–serine 388 is disordered. Positions alanine 377–serine 388 are enriched in polar residues.

This sequence belongs to the IspG family. [4Fe-4S] cluster is required as a cofactor.

It carries out the reaction (2E)-4-hydroxy-3-methylbut-2-enyl diphosphate + oxidized [flavodoxin] + H2O + 2 H(+) = 2-C-methyl-D-erythritol 2,4-cyclic diphosphate + reduced [flavodoxin]. Its pathway is isoprenoid biosynthesis; isopentenyl diphosphate biosynthesis via DXP pathway; isopentenyl diphosphate from 1-deoxy-D-xylulose 5-phosphate: step 5/6. In terms of biological role, converts 2C-methyl-D-erythritol 2,4-cyclodiphosphate (ME-2,4cPP) into 1-hydroxy-2-methyl-2-(E)-butenyl 4-diphosphate. The sequence is that of 4-hydroxy-3-methylbut-2-en-1-yl diphosphate synthase (flavodoxin) from Mycolicibacterium paratuberculosis (strain ATCC BAA-968 / K-10) (Mycobacterium paratuberculosis).